Here is a 506-residue protein sequence, read N- to C-terminus: Adenylosuccinate synthetase (506 aa).

GTP-binding positions include 35–41 (GDEGKGK) and 63–65 (GHT). Catalysis depends on D36, which acts as the Proton acceptor. The Mg(2+) site is built by D36 and G63. IMP contacts are provided by residues 36–39 (DEGK), 61–64 (NAGH), T212, R226, N304, T319, and R383. H64 serves as the catalytic Proton donor. 379-385 (VTTKRKR) serves as a coordination point for substrate. GTP-binding positions include R385, 411 to 413 (KLD), and 494 to 496 (GVG).

The protein belongs to the adenylosuccinate synthetase family. Homodimer. Mg(2+) is required as a cofactor.

Its subcellular location is the cytoplasm. The enzyme catalyses IMP + L-aspartate + GTP = N(6)-(1,2-dicarboxyethyl)-AMP + GDP + phosphate + 2 H(+). It functions in the pathway purine metabolism; AMP biosynthesis via de novo pathway; AMP from IMP: step 1/2. Functionally, plays an important role in the de novo pathway and in the salvage pathway of purine nucleotide biosynthesis. Catalyzes the first committed step in the biosynthesis of AMP from IMP. This is Adenylosuccinate synthetase from Drosophila yakuba (Fruit fly).